An 84-amino-acid polypeptide reads, in one-letter code: ATP synthase subunit c (84 aa).

2 consecutive transmembrane segments (helical) span residues Ile9–Ile29 and Ile54–Ile74.

It belongs to the ATPase C chain family. F-type ATPases have 2 components, F(1) - the catalytic core - and F(0) - the membrane proton channel. F(1) has five subunits: alpha(3), beta(3), gamma(1), delta(1), epsilon(1). F(0) has three main subunits: a(1), b(2) and c(10-14). The alpha and beta chains form an alternating ring which encloses part of the gamma chain. F(1) is attached to F(0) by a central stalk formed by the gamma and epsilon chains, while a peripheral stalk is formed by the delta and b chains.

It is found in the cell inner membrane. In terms of biological role, f(1)F(0) ATP synthase produces ATP from ADP in the presence of a proton or sodium gradient. F-type ATPases consist of two structural domains, F(1) containing the extramembraneous catalytic core and F(0) containing the membrane proton channel, linked together by a central stalk and a peripheral stalk. During catalysis, ATP synthesis in the catalytic domain of F(1) is coupled via a rotary mechanism of the central stalk subunits to proton translocation. Its function is as follows. Key component of the F(0) channel; it plays a direct role in translocation across the membrane. A homomeric c-ring of between 10-14 subunits forms the central stalk rotor element with the F(1) delta and epsilon subunits. In Haemophilus influenzae (strain PittEE), this protein is ATP synthase subunit c.